Here is a 578-residue protein sequence, read N- to C-terminus: Acyl-CoA synthetase ACTT5 (578 aa).

211–222 contacts AMP; that stretch reads RLTTSGTTGLPK. Residues 472-551 form an AMP-binding region; the sequence is ELEAALLQAK…DEIPRSPTGK (80 aa).

This sequence belongs to the ATP-dependent AMP-binding enzyme family.

It participates in mycotoxin biosynthesis. In terms of biological role, acyl-CoA synthetase; part of the gene clusters that mediate the biosynthesis of the host-selective toxins (HSTs) ACT-toxins responsible for brown spot of tangerine disease by the tangerine pathotype which affects tangerines and mandarins. ACT-toxins consist of three moieties, 9,10-epoxy-8-hydroxy-9-methyl-decatrienoic acid (EDA), valine and a polyketide. ACT-toxin I is toxic to both citrus and pear; toxin II the 5''-deoxy derivative of ACT-toxin I, is highly toxic to pear and slightly toxic to citrus. On cellular level, ACT-toxins affect plasma membrane of susceptible cells and cause a sudden increase in loss of K(+) after a few minutes of toxin treatment. The acyl-CoA ligase ACTT1, the hydrolase ACTT2, the enoyl-CoA hydratases ACTT3 and ACTT6, and the acyl-CoA synthetase ACTT5 are all involved in the biosynthesis of the AK-, AF- and ACT-toxin common 9,10-epoxy-8-hydroxy-9-methyl-decatrienoic acid (EDA) structural moiety. The exact role of each enzyme, and of additional enzymes identified within the AF-toxin clusters have still to be determined. On the other hand, ACTTS1 to ACTTS4 are specific to the tangerine pathotype. The function of ACTTS3 is to elongate the polyketide chain portion of ACT-toxin that is unique to this toxin. The enoyl-reductase ACTTS2 might complement the missing enoyl-reductase (ER) domain in ACTTS3 in the synthesis of the polyketide portion of ACT-toxin. The roles of the nonribosomal peptide synthetases-related proteins ACTTS1 and ACTTS4 have also still not been elucidated. This is Acyl-CoA synthetase ACTT5 from Alternaria alternata (Alternaria rot fungus).